The following is a 178-amino-acid chain: Arginine repressor (178 aa).

Residues Met1–Arg21 are disordered.

Belongs to the ArgR family.

It is found in the cytoplasm. The protein operates within amino-acid biosynthesis; L-arginine biosynthesis [regulation]. Functionally, regulates arginine biosynthesis genes. The chain is Arginine repressor from Streptomyces avermitilis (strain ATCC 31267 / DSM 46492 / JCM 5070 / NBRC 14893 / NCIMB 12804 / NRRL 8165 / MA-4680).